The sequence spans 152 residues: Snaclec 5 (152 aa).

A signal peptide spans 1–23; that stretch reads MGRFIFLSSGLLVVFLSLSGTGA. Cystine bridges form between C27/C38, C55/C148, and C123/C140. Residues 34-149 enclose the C-type lectin domain; the sequence is YGQHCYRAFK…CASHNPFVCK (116 aa).

Belongs to the snaclec family. In terms of assembly, heterodimer; disulfide-linked. Expressed by the venom gland.

The protein resides in the secreted. Its function is as follows. Interferes with one step of hemostasis (modulation of platelet aggregation, or coagulation cascade, for example). This Bitis arietans (African puff adder) protein is Snaclec 5.